The primary structure comprises 578 residues: Proline--tRNA ligase (578 aa).

This sequence belongs to the class-II aminoacyl-tRNA synthetase family. ProS type 1 subfamily. In terms of assembly, homodimer.

It is found in the cytoplasm. It carries out the reaction tRNA(Pro) + L-proline + ATP = L-prolyl-tRNA(Pro) + AMP + diphosphate. Its function is as follows. Catalyzes the attachment of proline to tRNA(Pro) in a two-step reaction: proline is first activated by ATP to form Pro-AMP and then transferred to the acceptor end of tRNA(Pro). As ProRS can inadvertently accommodate and process non-cognate amino acids such as alanine and cysteine, to avoid such errors it has two additional distinct editing activities against alanine. One activity is designated as 'pretransfer' editing and involves the tRNA(Pro)-independent hydrolysis of activated Ala-AMP. The other activity is designated 'posttransfer' editing and involves deacylation of mischarged Ala-tRNA(Pro). The misacylated Cys-tRNA(Pro) is not edited by ProRS. The chain is Proline--tRNA ligase from Burkholderia mallei (strain ATCC 23344).